Here is a 394-residue protein sequence, read N- to C-terminus: NAD(P)H-quinone oxidoreductase subunit H (394 aa).

It belongs to the complex I 49 kDa subunit family. In terms of assembly, NDH-1 can be composed of about 15 different subunits; different subcomplexes with different compositions have been identified which probably have different functions.

Its subcellular location is the cellular thylakoid membrane. The catalysed reaction is a plastoquinone + NADH + (n+1) H(+)(in) = a plastoquinol + NAD(+) + n H(+)(out). It catalyses the reaction a plastoquinone + NADPH + (n+1) H(+)(in) = a plastoquinol + NADP(+) + n H(+)(out). In terms of biological role, NDH-1 shuttles electrons from an unknown electron donor, via FMN and iron-sulfur (Fe-S) centers, to quinones in the respiratory and/or the photosynthetic chain. The immediate electron acceptor for the enzyme in this species is believed to be plastoquinone. Couples the redox reaction to proton translocation, and thus conserves the redox energy in a proton gradient. Cyanobacterial NDH-1 also plays a role in inorganic carbon-concentration. The protein is NAD(P)H-quinone oxidoreductase subunit H of Acaryochloris marina (strain MBIC 11017).